The primary structure comprises 153 residues: Probable histone H2A.4 (153 aa).

Residues 1–12 are compositionally biased toward basic residues; that stretch reads MDSGTKVKKGAA. Disordered stretches follow at residues 1-30 and 129-153; these read MDSG…RSVK and KSEK…PKKS. Residues 133-147 are compositionally biased toward low complexity; the sequence is AASTTKTPKSPSKAT. The SPKK motif signature appears at 149 to 152; that stretch reads SPKK.

The protein belongs to the histone H2A family. In terms of assembly, the nucleosome is a histone octamer containing two molecules each of H2A, H2B, H3 and H4 assembled in one H3-H4 heterotetramer and two H2A-H2B heterodimers. The octamer wraps approximately 147 bp of DNA. Not ubiquitinated.

Its subcellular location is the nucleus. It is found in the chromosome. Its function is as follows. Core component of nucleosome. Nucleosomes wrap and compact DNA into chromatin, limiting DNA accessibility to the cellular machineries which require DNA as a template. Histones thereby play a central role in transcription regulation, DNA repair, DNA replication and chromosomal stability. DNA accessibility is regulated via a complex set of post-translational modifications of histones, also called histone code, and nucleosome remodeling. The chain is Probable histone H2A.4 from Arabidopsis thaliana (Mouse-ear cress).